Here is a 109-residue protein sequence, read N- to C-terminus: Nucleoid-associated protein Bcer98_0019 (109 aa).

It belongs to the YbaB/EbfC family. Homodimer.

The protein localises to the cytoplasm. It is found in the nucleoid. Its function is as follows. Binds to DNA and alters its conformation. May be involved in regulation of gene expression, nucleoid organization and DNA protection. The protein is Nucleoid-associated protein Bcer98_0019 of Bacillus cytotoxicus (strain DSM 22905 / CIP 110041 / 391-98 / NVH 391-98).